A 197-amino-acid chain; its full sequence is Recombination protein RecR (197 aa).

The C4-type zinc finger occupies 56 to 71 (CERCNTFTETEICQRC). Residues 79 to 174 (SLLCVVEMPA…RVSRLSRGVP (96 aa)) form the Toprim domain.

This sequence belongs to the RecR family.

Functionally, may play a role in DNA repair. It seems to be involved in an RecBC-independent recombinational process of DNA repair. It may act with RecF and RecO. In Aromatoleum aromaticum (strain DSM 19018 / LMG 30748 / EbN1) (Azoarcus sp. (strain EbN1)), this protein is Recombination protein RecR.